Consider the following 204-residue polypeptide: MLNFWQILILLVIILIVYMYTFKFVQKFILQDAYMHINELEAPPLNFTFQRNRGVDCSLNRLPCVTDQQCRDNCVISSAANELTCQDGFCNASDALVNAQAPDLIECDPALGLVHVFSAGGDFVVSQTCVSTYRDLVDDTGTPRPYLCNDGRLNMNLNTVQFSPDACDCSSGYEKMLFRQTALARTIPVCIPNRMANLYRRVYN.

In terms of assembly, forms the PIF complex together with PIF1 and PIF2. The complex also interacts with per os infectivity factor PIF0.

Functionally, per os factor that plays a role in the initiation of host midgut infection. Unlike PIF1 and PIF2, PIF3 is not involved in specific binding of occluded virions (ODV) to the host midgut target cells. This Lepidoptera (butterflies and moths) protein is Per os infectivity factor 3 (AC115).